We begin with the raw amino-acid sequence, 284 residues long: MSKIETSGPVVQVGDARFANHLPLTLIAGPCQLEGRQHALEIAAALKEMAAGLGVGLVFKTSFDKANRTSGSAARGIGLDGALPVFAEIRETLGLPVLTDVHAAEQCARAAEAVDVLQIPAFLCRQTDLLLAAAATGRAVNIKKGQFLAPWDMKHVAAKVTEAGNPNVIVTERGASFGYNTLVSDMRSLPIMAQVTQGAPVVFDATHSVQQPGGQGASSGGQREFVAVLARAAVAVGVAGVFIETHPDPDRAPSDGPNMVALRDMPALLEELLAFDRLAKRRTA.

This sequence belongs to the KdsA family.

Its subcellular location is the cytoplasm. The catalysed reaction is D-arabinose 5-phosphate + phosphoenolpyruvate + H2O = 3-deoxy-alpha-D-manno-2-octulosonate-8-phosphate + phosphate. Its pathway is carbohydrate biosynthesis; 3-deoxy-D-manno-octulosonate biosynthesis; 3-deoxy-D-manno-octulosonate from D-ribulose 5-phosphate: step 2/3. The protein operates within bacterial outer membrane biogenesis; lipopolysaccharide biosynthesis. The protein is 2-dehydro-3-deoxyphosphooctonate aldolase of Methylobacterium radiotolerans (strain ATCC 27329 / DSM 1819 / JCM 2831 / NBRC 15690 / NCIMB 10815 / 0-1).